The chain runs to 188 residues: Photosystem I assembly protein Ycf4 (188 aa).

The next 2 helical transmembrane spans lie at 26 to 48 and 68 to 90; these read MLWASVSAIGGIGFLLAGLSSYF and AALTFYGVAGTLLSAYLWFVFFL.

It belongs to the Ycf4 family.

It localises to the cellular thylakoid membrane. In terms of biological role, seems to be required for the assembly of the photosystem I complex. In Picosynechococcus sp. (strain ATCC 27264 / PCC 7002 / PR-6) (Agmenellum quadruplicatum), this protein is Photosystem I assembly protein Ycf4.